Reading from the N-terminus, the 933-residue chain is MQRYDIIRMIGKGGMGEVYLAYDPVCSRKVALKRIREDLSDNELLKKRFLREAKIAADLVHPGVVPVFTICSDSDPVYYTMPYIEGYTLKSLLKSVWQCDSLPKDLAEQTSVGTFLSIFHKICSTVEYVHSRGILHRDLKPDNILLGLFSEVVILDWGAALSKEMQEEVLLDIDIPVTGSMFSNMTIPGKIVGTPDYMAPERLRGTPASESTDIYALGVILYQMLTLSFPYRNKKGKKISFRHQISSPEEIAPHREIPPFLSQVAMKALAADPKVRYASVKELKDDIEQHLQGSPEWTPKTILHTQKAECWKLRESILLSKYFPMLGVSPALWYSLAISKIESFSEVRLEYTLLRKGLEDGFGILLPPSEGVDHGDFYHGYGFWLHIKNSVFSVSLVKNGLEIRKTSRPIKENKEKFFIALEKQNHRLSLIIDHVVWMIHMDYLPGRGGRIGVIIQDVTDVCGNIVVLESSGSLQVSCLAVPDAFLNEKLYDRAITFYRRIAESFPGRKEGYEAQFRIGIALLEKASESGDSEGFTQALGKFEILHNSVAAPLEYLGKALVYQRLGEYNEEVKSLLLALKRYCQCPEISRIRDHIVYRLHETLYSNHRLSLVFMLLALHIAPESINATEEEYFVKNLHGKIQDTLFCNLDLSPIDFRSSKMELLLSYWSGFTPFLPGLFQKYWDLKDYRALADVFYVAADLGNREFLEMYSDLVRENICSTTCTEDIVEFLPHQLEHFFSGVRAISLHEPLEKVFAHIEILDPVLILYLFDLFAKDALIHHRGELILSAITLIEKYVSSQQYYEHLLPCEVLAYLWMKDEKKVYNLLCNNYEESLWLDDRSPAFVLYGCWLALVEDSSLSYLHLSGCREDALYPRALIGGFCSPLGICENQLSYQERRKLLLQKFIFFHCLGMNEERDNCTVAYDLLSIERSL.

A Protein kinase domain is found at 4–291; that stretch reads YDIIRMIGKG…ELKDDIEQHL (288 aa). Residues 10-18 and Lys33 contribute to the ATP site; that span reads IGKGGMGEV. Asp138 functions as the Proton acceptor in the catalytic mechanism.

Belongs to the protein kinase superfamily. Ser/Thr protein kinase family. In terms of processing, autophosphorylated on serine and threonine residues.

The catalysed reaction is L-seryl-[protein] + ATP = O-phospho-L-seryl-[protein] + ADP + H(+). It carries out the reaction L-threonyl-[protein] + ATP = O-phospho-L-threonyl-[protein] + ADP + H(+). In terms of biological role, together with the serine/threonine kinase Pkn1, may play a role in the specific interactions with host proteins during intracellular growth. The protein is Serine/threonine-protein kinase PknD of Chlamydia felis (strain Fe/C-56) (Chlamydophila felis).